Here is a 372-residue protein sequence, read N- to C-terminus: Glutamate 5-kinase (372 aa).

Lys14 contributes to the ATP binding site. Positions 54, 141, and 153 each coordinate substrate. Residue 173 to 174 (TD) coordinates ATP. Positions 280–358 (RGTLVLDDGA…EAIVRELGYM (79 aa)) constitute a PUA domain.

It belongs to the glutamate 5-kinase family.

The protein localises to the cytoplasm. The catalysed reaction is L-glutamate + ATP = L-glutamyl 5-phosphate + ADP. The protein operates within amino-acid biosynthesis; L-proline biosynthesis; L-glutamate 5-semialdehyde from L-glutamate: step 1/2. Catalyzes the transfer of a phosphate group to glutamate to form L-glutamate 5-phosphate. The sequence is that of Glutamate 5-kinase from Pseudomonas syringae pv. tomato (strain ATCC BAA-871 / DC3000).